The sequence spans 213 residues: MSEKSQCVIVGIAGASASGKSLIASTIYNELRAKVGDHQIGVITEDCYYNDQSHLSMEERVKTNYDHPNALDHDLLCEHLEKLMKGESVEVPEYSYTEHTRTENTTTMTPKKVIILEGILLLTDPRLRDLMHATVFMDTPLDICLLRRVKRDVEERGRTMESVLKQYQKTVRPMFMQFIEPSKQYADIIVPRGGKNRIAIDVLKAHIAKLLKA.

14–21 contributes to the ATP binding site; that stretch reads GASASGKS.

Belongs to the uridine kinase family.

Its subcellular location is the cytoplasm. It carries out the reaction uridine + ATP = UMP + ADP + H(+). It catalyses the reaction cytidine + ATP = CMP + ADP + H(+). The protein operates within pyrimidine metabolism; CTP biosynthesis via salvage pathway; CTP from cytidine: step 1/3. Its pathway is pyrimidine metabolism; UMP biosynthesis via salvage pathway; UMP from uridine: step 1/1. This chain is Uridine kinase, found in Vibrio vulnificus (strain CMCP6).